The following is a 332-amino-acid chain: CMRF35-like molecule 1 (332 aa).

An N-terminal signal peptide occupies residues 1–18; sequence MHLSLLALFLFWISGCFT. Over 19-181 the chain is Extracellular; the sequence is AQDPVTGPEE…GDGNGFLDLS (163 aa). Positions 22 to 125 constitute an Ig-like V-type domain; that stretch reads PVTGPEEVSG…YDHMFKVHVS (104 aa). 2 cysteine pairs are disulfide-bonded: C41/C109 and C55/C63. N-linked (GlcNAc...) asparagine glycosylation is present at N89. The chain crosses the membrane as a helical span at residues 182–202; sequence VLLPVISAALLLLLLVVSLIA. The Cytoplasmic segment spans residues 203-332; sequence WRMVRRQKKA…EYSSIRRPMP (130 aa). Disordered stretches follow at residues 251–270 and 313–332; these read PRTS…KDHQ and PRTN…RPMP.

Belongs to the CD300 family. In terms of assembly, interacts with PTPN6/SHP-1 in a tyrosine phosphorylation dependent manner. Interacts with IL4R. Post-translationally, phosphorylated on tyrosine.

The protein resides in the cell membrane. In terms of biological role, acts as an inhibitory receptor for myeloid cells and mast cells. Positively regulates the phagocytosis of apoptotic cells (efferocytosis) via phosphatidylserine (PS) recognition; recognizes and binds PS as a ligand which is expressed on the surface of apoptotic cells. Plays an important role in the maintenance of immune homeostasis, by promoting macrophage-mediated efferocytosis and by inhibiting dendritic cell-mediated efferocytosis. Negatively regulates Fc epsilon receptor-dependent mast cell activation and allergic responses via binding to ceramide and sphingomyelin which act as ligands. May act as a coreceptor for interleukin 4 (IL-4). Associates with and regulates IL-4 receptor alpha-mediated responses by augmenting IL-4- and IL-13-induced signaling. Negatively regulates the Toll-like receptor (TLR) signaling mediated by MYD88 and TRIF through activation of PTPN6/SHP-1 and PTPN11/SHP-2. Inhibits osteoclast formation. Induces macrophage cell death upon engagement. In Rattus norvegicus (Rat), this protein is CMRF35-like molecule 1 (Cd300lf).